Reading from the N-terminus, the 228-residue chain is Leucyl/phenylalanyl-tRNA--protein transferase (228 aa).

It belongs to the L/F-transferase family.

Its subcellular location is the cytoplasm. It catalyses the reaction N-terminal L-lysyl-[protein] + L-leucyl-tRNA(Leu) = N-terminal L-leucyl-L-lysyl-[protein] + tRNA(Leu) + H(+). The catalysed reaction is N-terminal L-arginyl-[protein] + L-leucyl-tRNA(Leu) = N-terminal L-leucyl-L-arginyl-[protein] + tRNA(Leu) + H(+). The enzyme catalyses L-phenylalanyl-tRNA(Phe) + an N-terminal L-alpha-aminoacyl-[protein] = an N-terminal L-phenylalanyl-L-alpha-aminoacyl-[protein] + tRNA(Phe). In terms of biological role, functions in the N-end rule pathway of protein degradation where it conjugates Leu, Phe and, less efficiently, Met from aminoacyl-tRNAs to the N-termini of proteins containing an N-terminal arginine or lysine. This is Leucyl/phenylalanyl-tRNA--protein transferase from Thiobacillus denitrificans (strain ATCC 25259 / T1).